The sequence spans 217 residues: Somatotropin (217 aa).

A signal peptide spans 1–27 (MMAAGPRASLLLAFALLCLPWTQEVGA). Position 46 (His-46) interacts with Zn(2+). Cys-79 and Cys-190 form a disulfide bridge. Ser-132 is modified (phosphoserine). Position 199 (Glu-199) interacts with Zn(2+). Cys-207 and Cys-215 are joined by a disulfide.

This sequence belongs to the somatotropin/prolactin family.

The protein localises to the secreted. In terms of biological role, plays an important role in growth control. Its major role in stimulating body growth is to stimulate the liver and other tissues to secrete IGF1. It stimulates both the differentiation and proliferation of myoblasts. It also stimulates amino acid uptake and protein synthesis in muscle and other tissues. This chain is Somatotropin (GH1), found in Cervus elaphus (Red deer).